We begin with the raw amino-acid sequence, 1008 residues long: DNA polymerase catalytic subunit (1008 aa).

The protein belongs to the DNA polymerase type-B family.

Its subcellular location is the host nucleus. It catalyses the reaction DNA(n) + a 2'-deoxyribonucleoside 5'-triphosphate = DNA(n+1) + diphosphate. This Equine herpesvirus 2 (strain 86/87) (EHV-2) protein is DNA polymerase catalytic subunit (9).